Here is a 407-residue protein sequence, read N- to C-terminus: Tyrosine--tRNA ligase (407 aa).

Tyrosine 35 provides a ligand contact to L-tyrosine. Residues 40-49 (PTADSLHVGH) carry the 'HIGH' region motif. 2 residues coordinate L-tyrosine: tyrosine 168 and glutamine 172. Positions 228-232 (KMGKT) match the 'KMSKS' region motif. Lysine 231 lines the ATP pocket. Residues 341–405 (NPLVDLLAKC…RGKKNFNRIV (65 aa)) form the S4 RNA-binding domain.

This sequence belongs to the class-I aminoacyl-tRNA synthetase family. TyrS type 1 subfamily. In terms of assembly, homodimer.

It is found in the cytoplasm. The enzyme catalyses tRNA(Tyr) + L-tyrosine + ATP = L-tyrosyl-tRNA(Tyr) + AMP + diphosphate + H(+). Its function is as follows. Catalyzes the attachment of tyrosine to tRNA(Tyr) in a two-step reaction: tyrosine is first activated by ATP to form Tyr-AMP and then transferred to the acceptor end of tRNA(Tyr). This Clostridium botulinum (strain 657 / Type Ba4) protein is Tyrosine--tRNA ligase.